The sequence spans 376 residues: Erythronate-4-phosphate dehydrogenase (376 aa).

Substrate-binding residues include serine 45 and threonine 67. Residue aspartate 147 coordinates NAD(+). Arginine 209 is an active-site residue. Aspartate 233 lines the NAD(+) pocket. Glutamate 238 is an active-site residue. Histidine 255 (proton donor) is an active-site residue. Glycine 258 is an NAD(+) binding site. Tyrosine 259 is a binding site for substrate.

This sequence belongs to the D-isomer specific 2-hydroxyacid dehydrogenase family. PdxB subfamily. As to quaternary structure, homodimer.

The protein resides in the cytoplasm. It catalyses the reaction 4-phospho-D-erythronate + NAD(+) = (R)-3-hydroxy-2-oxo-4-phosphooxybutanoate + NADH + H(+). Its pathway is cofactor biosynthesis; pyridoxine 5'-phosphate biosynthesis; pyridoxine 5'-phosphate from D-erythrose 4-phosphate: step 2/5. Its function is as follows. Catalyzes the oxidation of erythronate-4-phosphate to 3-hydroxy-2-oxo-4-phosphonooxybutanoate. This chain is Erythronate-4-phosphate dehydrogenase, found in Shewanella sp. (strain W3-18-1).